The sequence spans 137 residues: Proofreading thioesterase EntH (137 aa).

The active-site Nucleophile or proton acceptor is the Glu63.

It belongs to the thioesterase PaaI family. Homotetramer. Dimer of dimers. Interacts specifically with the aryl carrier protein (ArCP) domain of EntB.

It is found in the cytoplasm. It functions in the pathway siderophore biosynthesis; enterobactin biosynthesis. Its function is as follows. Required for optimal enterobactin synthesis. Acts as a proofreading enzyme that prevents EntB misacylation by hydrolyzing the thioester bound existing between EntB and wrongly charged molecules. This chain is Proofreading thioesterase EntH, found in Cronobacter turicensis (strain DSM 18703 / CCUG 55852 / LMG 23827 / z3032).